The following is a 261-amino-acid chain: MYKDLEGKVVVITGSSTGLGKAMAIRFATEKAKVVVNYRSKEEEANSVLEEIKKVGGEAIAVKGDVTVESDVINLVQSSIKEFGKLDVMINNAGMENPVSSHEMSLSDWNKVIDTNLTGAFLGSREAIKYFVENDIKGTVINMSSVHEKIPWPLFVHYAASKGGMKLMTETLALEYAPKGIRVNNIGPGAINTPINAEKFADPEQRADVESMIPMGYIGEPEEIAAVAAWLASSEASYVTGITLFADGGMTQYPSFQAGRG.

Residue 11-35 coordinates NADP(+); sequence VITGSSTGLGKAMAIRFATEKAKVV. S145 serves as a coordination point for substrate. Y158 serves as the catalytic Proton acceptor.

Belongs to the short-chain dehydrogenases/reductases (SDR) family. Homotetramer.

It catalyses the reaction D-glucose + NAD(+) = D-glucono-1,5-lactone + NADH + H(+). The enzyme catalyses D-glucose + NADP(+) = D-glucono-1,5-lactone + NADPH + H(+). May play some role in spore germination. This chain is Glucose 1-dehydrogenase 1 (gdhI), found in Priestia megaterium (Bacillus megaterium).